We begin with the raw amino-acid sequence, 663 residues long: Heparan-alpha-glucosaminide N-acetyltransferase (663 aa).

Positions 1–24 (MTGARASAAEQRRAGRSGQARAAE) are disordered. Residues 1–190 (MTGARASAAE…LAVNEDPVDS (190 aa)) are Lumenal, vesicle-facing. N-linked (GlcNAc...) asparagine glycans are attached at residues Asn94, Asn142, and Asn162. Cys151 and Cys462 are joined by a disulfide. The helical transmembrane segment at 191-211 (NLPVSIAFLIGLAVIIVISFL) threads the bilayer. The Cytoplasmic portion of the chain corresponds to 212–275 (RLLLSLDDFN…PRLRSVDTFR (64 aa)). A phosphoserine mark is found at Ser243 and Ser245. A helical membrane pass occupies residues 276 to 296 (GIALILMVFVNYGGGKYWYFK). His297 is a catalytic residue. Over 297–302 (HASWNG) the chain is Lumenal, vesicle. Residues 303–323 (LTVADLVFPWFVFIMGSSIFL) form a helical membrane-spanning segment. Residues 324–345 (SMTSILQRGCSKFRLLGKIAWR) are Cytoplasmic-facing. The helical transmembrane segment at 346–366 (SFLLICIGIIIVNPNYCLGPL) threads the bilayer. Residues 367-374 (SWDKVRIP) lie on the Lumenal, vesicle side of the membrane. A helical membrane pass occupies residues 375–395 (GVLQRLGVTYFVVAVLELLFA). At 396-420 (KPVPEHCASERSCLSLRDITSSWPQ) the chain is on the cytoplasmic side. A helical transmembrane segment spans residues 421-441 (WLLILVLEGLWLGLTFLLPVP). Residues 442-500 (GCPTGYLGPGGIGDFGKYPNCTGGAAGYIDRLLLGDDHLYQHPSSAVLYHTEVAYDPEG) lie on the Lumenal, vesicle side of the membrane. Residues 501–521 (ILGTINSIVMAFLGVQAGKIL) form a helical membrane-spanning segment. Residues 522–529 (LYYKARTK) lie on the Cytoplasmic side of the membrane. Residues 530–550 (DILIRFTAWCCILGLISVALT) traverse the membrane as a helical segment. Over 551–564 (KVSENEGFIPVNKN) the chain is Lumenal, vesicle. Residues 565-585 (LWSLSYVTTLSSFAFFILLVL) form a helical membrane-spanning segment. Over 586–592 (YPVVDVK) the chain is Cytoplasmic. The helical transmembrane segment at 593–613 (GLWTGTPFFYPGMNSILVYVG) threads the bilayer. Residues 614–634 (HEVFENYFPFQWKLKDNQSHK) are Lumenal, vesicle-facing. Residues 624–635 (QWKLKDNQSHKE) form a lysosomal targeting region region. The helical transmembrane segment at 635–655 (EHLTQNIVATALWVLIAYILY) threads the bilayer. At 656–663 (RKKIFWKI) the chain is on the cytoplasmic side.

Homooligomer. Homooligomerization is necessary for enzyme activity. In terms of processing, undergoes intralysosomal proteolytic cleavage; occurs within the end of the first and/or the beginning of the second luminal domain and is essential for the activation of the enzyme. Post-translationally, glycosylated. Widely expressed, with highest level in leukocytes, heart, liver, skeletal muscle, lung, placenta and liver.

It localises to the lysosome membrane. It carries out the reaction alpha-D-glucosaminyl-[heparan sulfate](n) + acetyl-CoA = N-acetyl-alpha-D-glucosaminyl-[heparan sulfate](n) + CoA + H(+). Its function is as follows. Lysosomal acetyltransferase that acetylates the non-reducing terminal alpha-glucosamine residue of intralysosomal heparin or heparan sulfate, converting it into a substrate for luminal alpha-N-acetyl glucosaminidase. This Homo sapiens (Human) protein is Heparan-alpha-glucosaminide N-acetyltransferase (HGSNAT).